The sequence spans 331 residues: Tetraacyldisaccharide 4'-kinase (331 aa).

ATP is bound at residue 57-64 (SVGGNGKT).

Belongs to the LpxK family.

It catalyses the reaction a lipid A disaccharide + ATP = a lipid IVA + ADP + H(+). It functions in the pathway glycolipid biosynthesis; lipid IV(A) biosynthesis; lipid IV(A) from (3R)-3-hydroxytetradecanoyl-[acyl-carrier-protein] and UDP-N-acetyl-alpha-D-glucosamine: step 6/6. Transfers the gamma-phosphate of ATP to the 4'-position of a tetraacyldisaccharide 1-phosphate intermediate (termed DS-1-P) to form tetraacyldisaccharide 1,4'-bis-phosphate (lipid IVA). In Histophilus somni (strain 2336) (Haemophilus somnus), this protein is Tetraacyldisaccharide 4'-kinase.